A 216-amino-acid polypeptide reads, in one-letter code: Probable GTP-binding protein EngB (216 aa).

Residues 26–200 (EGIEIAFAGR…RAKLDTWFAP (175 aa)) enclose the EngB-type G domain. GTP-binding positions include 34–41 (GRSNAGKS), 61–65 (GRTQL), 79–82 (DLPG), 146–149 (TKAD), and 179–181 (YSS). Positions 41 and 63 each coordinate Mg(2+).

This sequence belongs to the TRAFAC class TrmE-Era-EngA-EngB-Septin-like GTPase superfamily. EngB GTPase family. Mg(2+) serves as cofactor.

Necessary for normal cell division and for the maintenance of normal septation. In Vibrio vulnificus (strain YJ016), this protein is Probable GTP-binding protein EngB.